The following is a 447-amino-acid chain: Signal recognition particle 54 kDa protein (447 aa).

Residues glycine 108–threonine 115, aspartate 188–arginine 192, and threonine 246–aspartate 249 contribute to the GTP site.

It belongs to the GTP-binding SRP family. SRP54 subfamily. In terms of assembly, part of the signal recognition particle protein translocation system, which is composed of SRP and FtsY. Archaeal SRP consists of a 7S RNA molecule of 300 nucleotides and two protein subunits: SRP54 and SRP19.

It is found in the cytoplasm. It catalyses the reaction GTP + H2O = GDP + phosphate + H(+). Involved in targeting and insertion of nascent membrane proteins into the cytoplasmic membrane. Binds to the hydrophobic signal sequence of the ribosome-nascent chain (RNC) as it emerges from the ribosomes. The SRP-RNC complex is then targeted to the cytoplasmic membrane where it interacts with the SRP receptor FtsY. This Methanopyrus kandleri (strain AV19 / DSM 6324 / JCM 9639 / NBRC 100938) protein is Signal recognition particle 54 kDa protein.